We begin with the raw amino-acid sequence, 241 residues long: Sugar fermentation stimulation protein homolog (241 aa).

It belongs to the SfsA family.

In Halorhodospira halophila (strain DSM 244 / SL1) (Ectothiorhodospira halophila (strain DSM 244 / SL1)), this protein is Sugar fermentation stimulation protein homolog.